The chain runs to 131 residues: Transcription antitermination protein NusB (131 aa).

The protein belongs to the NusB family.

Its function is as follows. Involved in transcription antitermination. Required for transcription of ribosomal RNA (rRNA) genes. Binds specifically to the boxA antiterminator sequence of the ribosomal RNA (rrn) operons. This chain is Transcription antitermination protein NusB, found in Campylobacter hominis (strain ATCC BAA-381 / DSM 21671 / CCUG 45161 / LMG 19568 / NCTC 13146 / CH001A).